Reading from the N-terminus, the 99-residue chain is Large ribosomal subunit protein uL23 (99 aa).

In terms of assembly, contacts protein L29, and trigger factor when it is bound to the ribosome. Part of the 50S ribosomal subunit.

One of the early assembly proteins it binds 23S rRNA. One of the proteins that surrounds the polypeptide exit tunnel on the outside of the ribosome. Forms the main docking site for trigger factor binding to the ribosome. This Rhodopseudomonas palustris (strain ATCC BAA-98 / CGA009) protein is Large ribosomal subunit protein uL23.